The chain runs to 2096 residues: HEAT repeat-containing protein 1 homolog (2096 aa).

An HEAT repeat occupies 2058–2096; the sequence is TVPFIAELLEDEHQRVEKNTRTGVQELETILGESVQKYL.

Belongs to the HEATR1/UTP10 family. In terms of assembly, part of the small subunit (SSU) processome, composed of more than 70 proteins and the RNA chaperone small nucleolar RNA (snoRNA) U3. Interacts with MYC; the interaction is required for localization of MYC to the nucleolus.

The protein localises to the nucleus. The protein resides in the nucleolus. Its function is as follows. Ribosome biogenesis factor; required for recruitment of Myc to nucleoli. Involved in nucleolar processing of pre-18S ribosomal RNA. Required for optimal pre-ribosomal RNA transcription by RNA polymerase I. Part of the small subunit (SSU) processome, first precursor of the small eukaryotic ribosomal subunit. During the assembly of the SSU processome in the nucleolus, many ribosome biogenesis factors, an RNA chaperone and ribosomal proteins associate with the nascent pre-rRNA and work in concert to generate RNA folding, modifications, rearrangements and cleavage as well as targeted degradation of pre-ribosomal RNA by the RNA exosome. Involved in neuronal-lineage cell proliferation during larval development. This Drosophila melanogaster (Fruit fly) protein is HEAT repeat-containing protein 1 homolog.